Here is a 968-residue protein sequence, read N- to C-terminus: Protein translocase subunit SecA (968 aa).

ATP-binding positions include Q99, 117–121 (GEGKT), and D631.

This sequence belongs to the SecA family. As to quaternary structure, monomer and homodimer. Part of the essential Sec protein translocation apparatus which comprises SecA, SecYEG and auxiliary proteins SecDF. Other proteins may also be involved.

It localises to the cell inner membrane. It is found in the cytoplasm. The enzyme catalyses ATP + H2O + cellular proteinSide 1 = ADP + phosphate + cellular proteinSide 2.. Its function is as follows. Part of the Sec protein translocase complex. Interacts with the SecYEG preprotein conducting channel. Has a central role in coupling the hydrolysis of ATP to the transfer of proteins into and across the cell membrane, serving as an ATP-driven molecular motor driving the stepwise translocation of polypeptide chains across the membrane. The chain is Protein translocase subunit SecA from Chlamydia muridarum (strain MoPn / Nigg).